The following is a 321-amino-acid chain: 2-oxoglutarate-dependent dioxygenase frbH (321 aa).

A disordered region spans residues 77–97 (SRNSDTHGYEPVATSTGAQDD). The region spanning 169-273 (ESLSTLSMFR…RFSIAYFLRA (105 aa)) is the Fe2OG dioxygenase domain. Fe cation-binding residues include H194, D196, and H251. R264 lines the 2-oxoglutarate pocket.

This sequence belongs to the iron/ascorbate-dependent oxidoreductase family.

It functions in the pathway antifungal biosynthesis. Functionally, 2-oxoglutarate-dependent dioxygenase; part of the gene cluster that mediates the biosynthesis of the antifungal antibiotic FR901469, an inhibitor of beta-1,3-glucansynthase, exerting antifungal activity against the pathogenes Candida albicans and Aspergillus fumigatus. FR901469 is a cyclic depsipeptide containing 12 amino acid residues and a fatty acid chain. The NRPS frbI contains 12 modules responsible for the formation of the depsipeptide backbone which is denoted as Acyl-Thr-Ala-Tyr-Val-4OHPro-Thr-Thr-3OHPro-threo3OHGln-Gly-Thr-Orn-OH (C71H116N14O23). The PKS frbB is probably involved in the production of the hydrocarbon chain, and the acyl-CoA ligase frbC might be involved in the transport of the chain to the peptide ptoduct of frbI. Because FR901469 contains 3 hydroxylated amino acid residues, the 3 oxygenases frbA, frbH, and frbJ might be participating in amino acid hydroxylation. As no thioesterase domains were detected in frbI or frbB, the thioesterases frbD and frbE may instead release and cyclize the products of the NRPS and PKS, respectively. This Dothideomycetidae sp. (strain 11243) (Fungal sp. (strain No.11243)) protein is 2-oxoglutarate-dependent dioxygenase frbH.